We begin with the raw amino-acid sequence, 143 residues long: 3-dehydroquinate dehydratase (143 aa).

The active-site Proton acceptor is the tyrosine 23. The substrate site is built by asparagine 74, histidine 80, and aspartate 87. The Proton donor role is filled by histidine 100. Substrate contacts are provided by residues 101-102 and arginine 111; that span reads IS.

This sequence belongs to the type-II 3-dehydroquinase family. Homododecamer.

It carries out the reaction 3-dehydroquinate = 3-dehydroshikimate + H2O. It functions in the pathway metabolic intermediate biosynthesis; chorismate biosynthesis; chorismate from D-erythrose 4-phosphate and phosphoenolpyruvate: step 3/7. Its function is as follows. Catalyzes a trans-dehydration via an enolate intermediate. The chain is 3-dehydroquinate dehydratase from Endomicrobium trichonymphae.